The primary structure comprises 464 residues: MSLRFSSGSRHICLRSGTESVRPSSGGTGFAGSNVYGNSGAGCGFSYALGGGLGSLPGGDHAGGIPGSGTCVGFAGSEGGLFSGNEKVTMQNLNDRLASYLDNVRALEEANAELERKIKSWYEKHGPGSCHGLDHDYSRYHLTIEDLKNKIISSTTANANVILQIDNARLAADDFRLKYENELALHQNTEADINGLRRVLDELTLCRTDQELQYESLSEEMTYLKKNHEEEVKALQCVAGGNVNVEMNAAPGVDLTLLLNNMRAEYEDLAEQNRRDAEAWFNEKSASLQQQISDDAGAASSARGELTEMKRTVQTLDIELQSLLATKHSLECSLMETEGNYCAQLAQIQAQIGALEEQLHQVRTETEGQKLEYEQLLDIKVHLEKEIETYCRLIDGDRNSCSKSKGFGSGSPGNSSKDLSRTTLVKTVVEEIDQRGKVLSSRVQSIEEKTSKMTNGKTKQRVPF.

The head stretch occupies residues 1–85; the sequence is MSLRFSSGSR…GSEGGLFSGN (85 aa). A coil 1A region spans residues 86–121; the sequence is EKVTMQNLNDRLASYLDNVRALEEANAELERKIKSW. Residues 86-401 form the IF rod domain; the sequence is EKVTMQNLND…RLIDGDRNSC (316 aa). A linker 1 region spans residues 122–143; sequence YEKHGPGSCHGLDHDYSRYHLT. Residues 144 to 235 form a coil 1B region; that stretch reads IEDLKNKIIS…KNHEEEVKAL (92 aa). Residues 236–258 are linker 12; it reads QCVAGGNVNVEMNAAPGVDLTLL. Residues 259–397 form a coil 2 region; it reads LNNMRAEYED…ETYCRLIDGD (139 aa). The tract at residues 398 to 464 is tail; the sequence is RNSCSKSKGF…NGKTKQRVPF (67 aa). A compositionally biased stretch (low complexity) spans 402 to 417; it reads SKSKGFGSGSPGNSSK. Disordered stretches follow at residues 402 to 422 and 440 to 464; these read SKSK…LSRT and SSRV…RVPF.

This sequence belongs to the intermediate filament family. Heterotetramer of two type I and two type II keratins.

The protein localises to the cytoplasm. In terms of biological role, essential for the proper assembly of types I and II keratin protein complexes and the formation of keratin intermediate filaments in the inner root sheath (irs). The chain is Keratin, type I cytoskeletal 28 from Bos taurus (Bovine).